The primary structure comprises 108 residues: Small ribosomal subunit protein uS17 (108 aa).

The protein belongs to the universal ribosomal protein uS17 family. In terms of assembly, part of the 30S ribosomal subunit.

Its function is as follows. One of the primary rRNA binding proteins, it binds specifically to the 5'-end of 16S ribosomal RNA. The sequence is that of Small ribosomal subunit protein uS17 from Methanospirillum hungatei JF-1 (strain ATCC 27890 / DSM 864 / NBRC 100397 / JF-1).